Consider the following 69-residue polypeptide: Putative membrane protein insertion efficiency factor (69 aa).

The protein belongs to the UPF0161 family.

The protein resides in the cell membrane. Could be involved in insertion of integral membrane proteins into the membrane. In Alkaliphilus metalliredigens (strain QYMF), this protein is Putative membrane protein insertion efficiency factor.